The sequence spans 217 residues: Probable lipoprotein CPn_0875/CP_0994/CPj0875/CpB0904 (217 aa).

The signal sequence occupies residues 1–21; the sequence is MKRVIYKTIFCGLTLLTSLSS. Cys22 is lipidated: N-palmitoyl cysteine. Cys22 carries the S-diacylglycerol cysteine lipid modification.

Belongs to the chlamydial CPn_0875/CT_734/TC_0107 family.

It is found in the cell membrane. The protein is Probable lipoprotein CPn_0875/CP_0994/CPj0875/CpB0904 of Chlamydia pneumoniae (Chlamydophila pneumoniae).